Reading from the N-terminus, the 416-residue chain is D-amino acid dehydrogenase (416 aa).

3–17 (ITILGSGVIGVTTAY) contacts FAD.

It belongs to the DadA oxidoreductase family. FAD is required as a cofactor.

The catalysed reaction is a D-alpha-amino acid + A + H2O = a 2-oxocarboxylate + AH2 + NH4(+). It participates in amino-acid degradation; D-alanine degradation; NH(3) and pyruvate from D-alanine: step 1/1. Functionally, oxidative deamination of D-amino acids. The chain is D-amino acid dehydrogenase from Brucella abortus (strain S19).